The following is a 134-amino-acid chain: uncharacterized protein (134 aa).

3 consecutive transmembrane segments (helical) span residues 8–28, 54–74, and 113–133; these read FTSL…TVMY, GFQA…TFLL, and LACF…RLVD.

It belongs to the cornichon family.

Its subcellular location is the endoplasmic reticulum membrane. This is an uncharacterized protein from Schizosaccharomyces pombe (strain 972 / ATCC 24843) (Fission yeast).